The primary structure comprises 238 residues: Probable transglycosylase SceD 3 (238 aa).

Residues 1–27 form the signal peptide; the sequence is MKKTVVASTLAVGLGVTGFAAGNSADA. The tract at residues 82–161 is disordered; the sequence is YGQGSTNAPA…SEASEGSSVN (80 aa). The span at 89 to 156 shows a compositional bias: low complexity; that stretch reads APAQETAEQP…NESSSSEASE (68 aa).

The protein belongs to the transglycosylase family. SceD subfamily.

The protein localises to the secreted. In terms of biological role, is able to cleave peptidoglycan and affects clumping and separation of bacterial cells. The polypeptide is Probable transglycosylase SceD 3 (sceD3) (Staphylococcus saprophyticus subsp. saprophyticus (strain ATCC 15305 / DSM 20229 / NCIMB 8711 / NCTC 7292 / S-41)).